Here is a 303-residue protein sequence, read N- to C-terminus: MESLKDIRDNIKSVQSTQQVMVTMKMISSARIKKAQNAMLNARPFSLGLEGVIDDLRKDILDENNSFKDPDLSKFFKKPDMEKKNIGVLFITADKGLAGAFNALLLRAALNFIKENQDKNIYFFIIGKKGRDFLSRLKQPNVHIVYDAVGIFPKVGYVHADILGEEIINNFLKLDLCEVRVLYNDFKSMGSQKLENQRLIPFDFEIAQGHTEFGEEEHGFLFEPGKEMIFKLLLYRHIKAGLYRILLESQAAELAARMNAMDSASKNAGEIIDTLKVKLNKVRQSSITNEITEIVGAVEALNK.

It belongs to the ATPase gamma chain family. As to quaternary structure, F-type ATPases have 2 components, CF(1) - the catalytic core - and CF(0) - the membrane proton channel. CF(1) has five subunits: alpha(3), beta(3), gamma(1), delta(1), epsilon(1). CF(0) has three main subunits: a, b and c.

The protein resides in the cell inner membrane. Functionally, produces ATP from ADP in the presence of a proton gradient across the membrane. The gamma chain is believed to be important in regulating ATPase activity and the flow of protons through the CF(0) complex. The sequence is that of ATP synthase gamma chain from Elusimicrobium minutum (strain Pei191).